The chain runs to 1463 residues: Secretory phospholipase A2 receptor (1463 aa).

An N-terminal signal peptide occupies residues 1-20; sequence MPLLSLSLLLLLLQVPAGSA. The Extracellular segment spans residues 21–1392; sequence ETAAWAVTPE…IHTVKKHPGK (1372 aa). Residues 38–115 enclose the Ricin B-type lectin domain; it reads KGIFIIQSEN…CDSTHVSLKW (78 aa). The N-linked (GlcNAc...) asparagine glycan is linked to Asn-93. The Fibronectin type-II domain maps to 173 to 221; the sequence is AHGTPCMFPFQYNQQWHHECTREGREDNLLWCATTSRYERDEKWGFCPD. 16 disulfides stabilise this stretch: Cys-178/Cys-204, Cys-192/Cys-219, Cys-260/Cys-354, Cys-330/Cys-346, Cys-406/Cys-501, Cys-478/Cys-493, Cys-617/Cys-634, Cys-699/Cys-796, Cys-774/Cys-788, Cys-840/Cys-938, Cys-915/Cys-930, Cys-992/Cys-1096, Cys-1068/Cys-1088, Cys-1209/Cys-1223, Cys-1280/Cys-1377, and Cys-1354/Cys-1369. C-type lectin domains follow at residues 229 to 353, 357 to 500, 504 to 641, 646 to 795, 799 to 937, 941 to 1095, 1099 to 1230, and 1235 to 1376; these read CDAV…LPYV, YLNP…LFYL, TGLV…KAMS, PVEN…REWI, PRDV…MPSI, KKVW…YGFV, MQDA…LQGA, and PTET…KGFI. N-linked (GlcNAc...) asparagine glycosylation occurs at Asn-454. A glycan (N-linked (GlcNAc...) asparagine) is linked at Asn-1057. A helical transmembrane segment spans residues 1393–1421; the sequence is GPSHSVIPLTVALTLLVILAISTLSFCMY. Topologically, residues 1422–1463 are cytoplasmic; the sequence is KHSHIIFGRLAQFRNPYYPSANFSTVHLEENILISDLEKNDQ. The Endocytosis signal signature appears at 1436–1442; sequence NPYYPSA.

As to quaternary structure, interacts with sPLA2-IB/PLA2G1B; this interaction mediates intracellular signaling as well as clearance of extracellular sPLA2-IB/PLA2G1B via endocytotic pathway. Interacts with sPLA2-X/PLA2G10; this interaction mediates sPLA2-X/PLA2G10 clearance and inactivation. Post-translationally, the secretory phospholipase A2 receptor form may be produced by the action of metalloproteinases. It contains all extracellular domains and only lacks transmembrane and cytosolic regions. It is however unclear whether this form is produced by proteolytic cleavage as suggested by some experiments, or by alternative splicing.

It localises to the cell membrane. It is found in the secreted. Functionally, receptor for secretory phospholipase A2 (sPLA2). Also able to bind to snake PA2-like toxins. Although its precise function remains unclear, binding of sPLA2 to its receptor participates in both positive and negative regulation of sPLA2 functions as well as clearance of sPLA2. Binding of sPLA2-IB/PLA2G1B induces various effects depending on the cell type, such as activation of the mitogen-activated protein kinase (MAPK) cascade to induce cell proliferation, the production of lipid mediators, selective release of arachidonic acid in bone marrow-derived mast cells. In neutrophils, binding of sPLA2-IB/PLA2G1B can activate p38 MAPK to stimulate elastase release and cell adhesion. May be involved in responses in pro-inflammatory cytokine productions during endotoxic shock. Also has endocytic properties and rapidly internalizes sPLA2 ligands, which is particularly important for the clearance of extracellular sPLA2s to protect their potent enzymatic activities. The soluble secretory phospholipase A2 receptor form is circulating and acts as a negative regulator of sPLA2 functions by blocking the biological functions of sPLA2-IB/PLA2G1B and sPLA2-X/PLA2G10. The chain is Secretory phospholipase A2 receptor (PLA2R1) from Bos taurus (Bovine).